The chain runs to 540 residues: Chaperonin GroEL 1 (540 aa).

Residues 29-32 (TLGP), 86-90 (DGTTT), glycine 413, 478-480 (NAA), and aspartate 494 each bind ATP.

Belongs to the chaperonin (HSP60) family. Forms a cylinder of 14 subunits composed of two heptameric rings stacked back-to-back. Interacts with the co-chaperonin GroES.

It localises to the cytoplasm. The enzyme catalyses ATP + H2O + a folded polypeptide = ADP + phosphate + an unfolded polypeptide.. Together with its co-chaperonin GroES, plays an essential role in assisting protein folding. The GroEL-GroES system forms a nano-cage that allows encapsulation of the non-native substrate proteins and provides a physical environment optimized to promote and accelerate protein folding. The protein is Chaperonin GroEL 1 of Mycobacterium sp. (strain JLS).